The chain runs to 95 residues: Aspartyl/glutamyl-tRNA(Asn/Gln) amidotransferase subunit C (95 aa).

This sequence belongs to the GatC family. Heterotrimer of A, B and C subunits.

It catalyses the reaction L-glutamyl-tRNA(Gln) + L-glutamine + ATP + H2O = L-glutaminyl-tRNA(Gln) + L-glutamate + ADP + phosphate + H(+). The catalysed reaction is L-aspartyl-tRNA(Asn) + L-glutamine + ATP + H2O = L-asparaginyl-tRNA(Asn) + L-glutamate + ADP + phosphate + 2 H(+). Its function is as follows. Allows the formation of correctly charged Asn-tRNA(Asn) or Gln-tRNA(Gln) through the transamidation of misacylated Asp-tRNA(Asn) or Glu-tRNA(Gln) in organisms which lack either or both of asparaginyl-tRNA or glutaminyl-tRNA synthetases. The reaction takes place in the presence of glutamine and ATP through an activated phospho-Asp-tRNA(Asn) or phospho-Glu-tRNA(Gln). The polypeptide is Aspartyl/glutamyl-tRNA(Asn/Gln) amidotransferase subunit C (Methylobacillus flagellatus (strain ATCC 51484 / DSM 6875 / VKM B-1610 / KT)).